Reading from the N-terminus, the 360-residue chain is AA9 family lytic polysaccharide monooxygenase A (360 aa).

Residues 1-19 (MKTSFGLLALAAAAKLVNA) form the signal peptide. His-20 and His-102 together coordinate Cu(2+). Cys-62 and Cys-183 are disulfide-bonded. Residue His-169 participates in O2 binding. Tyr-180 is a Cu(2+) binding site. The tract at residues 254-293 (TSAASASSTKAPATTAAPVQTESAKPATSTTQAAAPTTLV) is disordered. Residues 322–358 (GVVKMYAQCGGMNYSGSTTCESGLTCKQWNPYYHQCV) enclose the CBM1 domain. N-linked (GlcNAc...) asparagine glycosylation is present at Asn-334.

The protein belongs to the polysaccharide monooxygenase AA9 family. It depends on Cu(2+) as a cofactor.

The protein localises to the secreted. The catalysed reaction is [(1-&gt;4)-beta-D-glucosyl]n+m + reduced acceptor + O2 = 4-dehydro-beta-D-glucosyl-[(1-&gt;4)-beta-D-glucosyl]n-1 + [(1-&gt;4)-beta-D-glucosyl]m + acceptor + H2O.. Functionally, lytic polysaccharide monooxygenase (LPMO) that depolymerizes crystalline and amorphous polysaccharides via the oxidation of scissile alpha- or beta-(1-4)-glycosidic bonds, yielding C4 oxidation products. Catalysis by LPMOs requires the reduction of the active-site copper from Cu(II) to Cu(I) by a reducing agent and H(2)O(2) or O(2) as a cosubstrate. This is AA9 family lytic polysaccharide monooxygenase A (eglD) from Aspergillus terreus (strain NIH 2624 / FGSC A1156).